Reading from the N-terminus, the 222-residue chain is Nucleoside triphosphate pyrophosphatase (222 aa).

The active-site Proton acceptor is the Asp-82.

The protein belongs to the Maf family. A divalent metal cation serves as cofactor.

It localises to the cytoplasm. It carries out the reaction a ribonucleoside 5'-triphosphate + H2O = a ribonucleoside 5'-phosphate + diphosphate + H(+). It catalyses the reaction a 2'-deoxyribonucleoside 5'-triphosphate + H2O = a 2'-deoxyribonucleoside 5'-phosphate + diphosphate + H(+). Its function is as follows. Nucleoside triphosphate pyrophosphatase. May have a dual role in cell division arrest and in preventing the incorporation of modified nucleotides into cellular nucleic acids. This is Nucleoside triphosphate pyrophosphatase from Mycobacterium bovis (strain ATCC BAA-935 / AF2122/97).